The following is a 249-amino-acid chain: tRNA uridine(34) hydroxylase (249 aa).

Positions 124–218 constitute a Rhodanese domain; it reads TKQDVIVIDT…YLEDTQNKNN (95 aa). The Cysteine persulfide intermediate role is filled by cysteine 178.

Belongs to the TrhO family.

It carries out the reaction uridine(34) in tRNA + AH2 + O2 = 5-hydroxyuridine(34) in tRNA + A + H2O. In terms of biological role, catalyzes oxygen-dependent 5-hydroxyuridine (ho5U) modification at position 34 in tRNAs. In Rickettsia canadensis (strain McKiel), this protein is tRNA uridine(34) hydroxylase.